A 75-amino-acid chain; its full sequence is Lysis protein (75 aa).

Residues 1 to 16 (METRFPQQSQQTPAST) show a composition bias toward polar residues. The segment at 1–29 (METRFPQQSQQTPASTNRRRPFKHEDYPC) is disordered. The helical transmembrane segment at 38 to 60 (LYVLIFLAIFLSKFTNQLLLSLL) threads the bilayer.

This sequence belongs to the Leviviricetes lysis protein family.

It localises to the host cell inner membrane. The protein resides in the host cell outer membrane. In terms of biological role, induces the formation of specific membrane adhesion sites between the inner and outer membranes, apparently leading to host cell lysis. Lysis may be performed via activation of host murein hydrolases. This chain is Lysis protein, found in Escherichia phage MS2 (Bacteriophage MS2).